We begin with the raw amino-acid sequence, 290 residues long: Protease HtpX homolog (290 aa).

Transmembrane regions (helical) follow at residues 5–27 (MWLR…GYLF) and 32–51 (VAFI…YWYS). His-133 contributes to the Zn(2+) binding site. The active site involves Glu-134. His-137 contributes to the Zn(2+) binding site. Helical transmembrane passes span 143 to 163 (ILIG…AYWA) and 182 to 202 (IIGA…IQAA). Residue Glu-208 coordinates Zn(2+).

This sequence belongs to the peptidase M48B family. Requires Zn(2+) as cofactor.

It localises to the cell membrane. The protein is Protease HtpX homolog of Thermococcus kodakarensis (strain ATCC BAA-918 / JCM 12380 / KOD1) (Pyrococcus kodakaraensis (strain KOD1)).